A 184-amino-acid polypeptide reads, in one-letter code: Ras-related protein RabN2 (184 aa).

3-10 (GDYRSGKT) is a binding site for GTP. The Effector region signature appears at 25-32 (TNPSTFDY). GTP contacts are provided by residues 50 to 54 (DTAGH) and 117 to 120 (TKSD).

The protein belongs to the small GTPase superfamily. Rab family.

This Dictyostelium discoideum (Social amoeba) protein is Ras-related protein RabN2 (rabN2).